Here is a 664-residue protein sequence, read N- to C-terminus: Zinc finger protein 800 (664 aa).

Residues 69–91 form a C2H2-type 1; degenerate zinc finger; it reads FECKLCRSLFRGLPNLITHKKFY. A Glycyl lysine isopeptide (Lys-Gly) (interchain with G-Cter in SUMO2) cross-link involves residue K132. Composition is skewed to polar residues over residues 154 to 179 and 207 to 224; these read IEVT…EQSK and SDEQ…SDNS. The interval 154–224 is disordered; sequence IEVTESSSTP…QADLETSDNS (71 aa). The segment at 230–253 adopts a C2H2-type 2 zinc-finger fold; the sequence is LICCLCRKEFNSRRGVRRHIRKVH. K279 participates in a covalent cross-link: Glycyl lysine isopeptide (Lys-Gly) (interchain with G-Cter in SUMO2). Residues 287 to 310 form a C2H2-type 3 zinc finger; the sequence is RSCPVCCKSFATKANVRRHFDEVH. S317 carries the post-translational modification Phosphoserine. Position 319 is a phosphothreonine (T319). The tract at residues 328-349 is disordered; the sequence is QPLFLDSISPKKSFKTRKQKSS. S336 bears the Phosphoserine mark. Over residues 339–348 the composition is skewed to basic residues; sequence KSFKTRKQKS. The segment at 357-382 adopts a C2H2-type 4 zinc-finger fold; it reads TACKCLLCKRKYSSQIMLKRHMQIVH. The segment at 388-476 is disordered; that stretch reads GTNSKREKGP…GGQQKTRKPK (89 aa). K392 participates in a covalent cross-link: Glycyl lysine isopeptide (Lys-Gly) (interchain with G-Cter in SUMO2). K409 is covalently cross-linked (Glycyl lysine isopeptide (Lys-Gly) (interchain with G-Cter in SUMO1); alternate). A Glycyl lysine isopeptide (Lys-Gly) (interchain with G-Cter in SUMO2); alternate cross-link involves residue K409. The span at 416–436 shows a compositional bias: polar residues; sequence VESSPPSITHSPQNELKGTNH. Phosphoserine is present on residues S422, S426, S455, S457, S460, and S462. Residues 458–470 are compositionally biased toward polar residues; that stretch reads PKSTSPSAAGGQQ. K476 is covalently cross-linked (Glycyl lysine isopeptide (Lys-Gly) (interchain with G-Cter in SUMO2)). 2 consecutive C2H2-type zinc fingers follow at residues 486-508 and 519-542; these read LYCK…IELH and YKCP…TVVH. 2 disordered regions span residues 574 to 599 and 635 to 664; these read KRGP…PSKK and HHKK…KALV. Residues 577–591 are compositionally biased toward basic and acidic residues; sequence PSRDEAKHSDSKHDG. K599 is covalently cross-linked (Glycyl lysine isopeptide (Lys-Gly) (interchain with G-Cter in SUMO2)). The C2H2-type 7 zinc-finger motif lies at 618-640; it reads HRCNKCGKAFAKKTYLEHHKKTH. Positions 653-664 are enriched in basic residues; that stretch reads TKGRSTRSKALV.

Belongs to the krueppel C2H2-type zinc-finger protein family.

It is found in the nucleus. In terms of biological role, may be involved in transcriptional regulation. This Homo sapiens (Human) protein is Zinc finger protein 800 (ZNF800).